The chain runs to 730 residues: Catalase-peroxidase (730 aa).

The segment at 1 to 21 (MTENKCPVTGKMSKATAGSGT) is disordered. Residues 95 to 218 (WHSAGTYRVG…LAAVQMGLIY (124 aa)) constitute a cross-link (tryptophyl-tyrosyl-methioninium (Trp-Tyr) (with M-244)). The active-site Proton acceptor is His-96. Residues 218–244 (YVNPEGPNGNPDPLGSAHDVRETFARM) constitute a cross-link (tryptophyl-tyrosyl-methioninium (Tyr-Met) (with W-95)). His-259 is a binding site for heme b.

The protein belongs to the peroxidase family. Peroxidase/catalase subfamily. Homodimer or homotetramer. Heme b is required as a cofactor. Post-translationally, formation of the three residue Trp-Tyr-Met cross-link is important for the catalase, but not the peroxidase activity of the enzyme.

The enzyme catalyses H2O2 + AH2 = A + 2 H2O. It carries out the reaction 2 H2O2 = O2 + 2 H2O. Its function is as follows. Bifunctional enzyme with both catalase and broad-spectrum peroxidase activity. This is Catalase-peroxidase from Clostridium botulinum (strain Alaska E43 / Type E3).